We begin with the raw amino-acid sequence, 383 residues long: MKNKLPPFIEIYRALIATPSISATEEALDQSNADLITLLADWFKDLGFNVEVQPVPGTRNKFNMLASIGQGAGGLLLAGHTDTVPFDDGRWTRDPFTLTEHDGKLYGLGTADMKGFFAFILDALRDVDVTKLKKPLYILATADEETSMAGARYFAETTALRPDCAIIGEPTSLQPVRAHKGHISNAIRIQGQSGHSSDPARGVNAIELMHDAIGHILQLRDNLKERYHYEAFTVPYPTLNLGHIHGGDASNRICACCELHMDIRPLPGMTLNELNGLLNDALAPVSERWPGRLTVDELHPPIPGYECPPNHQLVEVVEKLLGAKTEVVNYCTEAPFIQTLCPTLVLGPGSINQAHQPDEYLETRFIKPTRELITQVIHHFCWH.

Histidine 80 lines the Zn(2+) pocket. Aspartate 82 is a catalytic residue. Aspartate 112 is a binding site for Zn(2+). The active site involves glutamate 144. Positions 145, 169, and 355 each coordinate Zn(2+).

It belongs to the peptidase M20A family. ArgE subfamily. As to quaternary structure, homodimer. Requires Zn(2+) as cofactor. Co(2+) is required as a cofactor. It depends on glutathione as a cofactor.

It localises to the cytoplasm. The catalysed reaction is N(2)-acetyl-L-ornithine + H2O = L-ornithine + acetate. The protein operates within amino-acid biosynthesis; L-arginine biosynthesis; L-ornithine from N(2)-acetyl-L-ornithine (linear): step 1/1. Catalyzes the hydrolysis of the amide bond of N(2)-acetylated L-amino acids. Cleaves the acetyl group from N-acetyl-L-ornithine to form L-ornithine, an intermediate in L-arginine biosynthesis pathway, and a branchpoint in the synthesis of polyamines. In Escherichia coli (strain K12 / MC4100 / BW2952), this protein is Acetylornithine deacetylase.